A 741-amino-acid chain; its full sequence is Mitofusin-1 (741 aa).

Residues 1–584 lie on the Cytoplasmic side of the membrane; sequence MAEPVSPLKH…ASQEELMITL (584 aa). The tract at residues 9–73 is part of a helix bundle domain, formed by helices from N-terminal and C-terminal regions; that stretch reads KHFVLAKKAI…LSIIGEVLSR (65 aa). Residues 72–321 form the Dynamin-type G domain; the sequence is SRRHMKVAFF…ARLQEFQNFE (250 aa). Residues 82 to 89 form a G1 motif region; it reads GRTSSGKS. A GTP-binding site is contributed by 85 to 90; it reads SSGKSS. Positions 108-109 are G2 motif; it reads IT. Positions 178 to 181 are G3 motif; the sequence is DSPG. 237 to 240 serves as a coordination point for GTP; sequence NRWD. The segment at 237–240 is G4 motif; it reads NRWD. Position 266 (Glu266) is a region of interest, G5 motif. The GTP site is built by Ser284 and Lys286. The tract at residues 338–364 is part of a helix bundle domain, formed by helices from N-terminal and C-terminal regions; that stretch reads EQHTIRAKQILATVKNIMDSVNLAAED. Residues 371-408 adopt a coiled-coil conformation; it reads EEREDQIDRLDFIRNQMNLLTLDVKKKIKEVTEEVANK. The helical transmembrane segment at 585–605 threads the bilayer; it reads VTGLASVTSRTSMGIIIVGGV. Over 606–608 the chain is Mitochondrial intermembrane; that stretch reads IWK. Residues 609–629 form a helical membrane-spanning segment; that stretch reads TIGWKLLSVSLTMYGALYLYE. The Cytoplasmic segment spans residues 630–741; it reads RLSWTTHAKE…QFLPSSNEES (112 aa). A coiled-coil region spans residues 679–734; it reads RLCQQVDITQKQLEEEIARLPKEIDQLEKIQNNSKLLRNKAVQLENELENFTKQFL. The segment at 703 to 734 is part of a helix bundle domain, formed by helices from N-terminal and C-terminal regions; that stretch reads DQLEKIQNNSKLLRNKAVQLENELENFTKQFL.

It belongs to the TRAFAC class dynamin-like GTPase superfamily. Dynamin/Fzo/YdjA family. Mitofusin subfamily. As to quaternary structure, homodimer, also in the absence of bound GTP. Forms higher oligomers in the presence of a transition state GTP analog. Forms homomultimers and heteromultimers with MFN2. Oligomerization is essential for mitochondrion fusion. Component of a high molecular weight multiprotein complex. Interacts with VAT1. Interacts with THG1L; THG1L probably functions as a guanyl-nucleotide exchange factor/GEF, activating MFN1. In terms of processing, ubiquitinated by non-degradative ubiquitin by PRKN. Deubiquitination by USP30 inhibits mitochondrial fusion. Ubiquitinated by MARCHF5. When mitochondria are depolarized and dysfunctional, it is ubiquitinated by a SCF (SKP1-CUL1-F-box protein) E3 ubiquitin-protein ligase complex that contains FBXO7 and PRKN. As to expression, detected in kidney and heart (at protein level). Ubiquitous. Expressed at slightly higher level in kidney and heart. Isoform 2 may be overexpressed in some tumors, such as lung cancers.

Its subcellular location is the mitochondrion outer membrane. It localises to the cytoplasm. The catalysed reaction is GTP + H2O = GDP + phosphate + H(+). Functionally, mitochondrial outer membrane GTPase that mediates mitochondrial clustering and fusion. Membrane clustering requires GTPase activity. It may involve a major rearrangement of the coiled coil domains. Mitochondria are highly dynamic organelles, and their morphology is determined by the equilibrium between mitochondrial fusion and fission events. Overexpression induces the formation of mitochondrial networks (in vitro). Has low GTPase activity. This is Mitofusin-1 (MFN1) from Homo sapiens (Human).